The following is a 560-amino-acid chain: MFFRPCVHTVGRYSRARVPGLLSSLFFYRSCNNVLTNSLPTVTTAGRVSRYGYICRRSSTSAAERGVFLPFALTCRRNIHSIHEDEKKLERWKKIEESHPLDELVLDSVVKVFSNSTEYSKSKPWKTLDQKSSRGTGFAIAGRKILTNAHVVMAMNDHTFVDVKRHGSQIKYKAKVQKISHECDLAILEIDSDEFWKGMNPLELGDIPPLQEVVSVVGGENICITKGLVLRVETRIYDYSDSDLLSIQIDATINDENSGGPVIMGNKVVGVVYEIGFVIPTPIIKHFITSVQESRQYSCFGSLDLSYQSLENVQIRNHFKMSHEMTGILINKINSSSGAYKILRKDDIILAIDGVPIGNDEKVPFQNKRRIDFSYLVSMKKPGEKALVKVLRNGKEYEYNISLKPVKPNFTVQQFYNVPSYYIFGGFVFVPLTKTYLDSEHHQVKISERLADDINEGYQSLYGAQVEKVNGVEVKNLKHLCELIEECSTEDLRLEFKNHKVLVLNYESAKKATLQILERHKIKSVISKDICLPMLLDDPFKDNKINLLPWSVLPLMFDFS.

The N-terminal 65 residues, methionine 1–arginine 65, are a transit peptide targeting the mitochondrion. A serine protease region spans residues threonine 117–serine 302. Active-site charge relay system residues include histidine 150, aspartate 184, and serine 258. The PDZ domain occupies isoleucine 288–glutamate 384.

The protein belongs to the peptidase S1C family.

It localises to the mitochondrion membrane. Putative serine protease. The polypeptide is Putative protease Do-like 11, mitochondrial (DEGP11) (Arabidopsis thaliana (Mouse-ear cress)).